Reading from the N-terminus, the 695-residue chain is L-type lectin-domain containing receptor kinase S.7 (695 aa).

Residues 1-23 (MPPRCRRLPLLFILLLAVRPLSA) form the signal peptide. The Extracellular portion of the chain corresponds to 24–331 (AAASSIAAAP…NHRRRHLFYK (308 aa)). The tract at residues 37 to 276 (YRRISWASNL…VERWTFRTFG (240 aa)) is legume-lectin like. 2 N-linked (GlcNAc...) asparagine glycosylation sites follow: asparagine 45 and asparagine 279. A compositionally biased stretch (pro residues) spans 286–320 (PTKYIGPMPPNNQPLPPPPSPSPSPPPPSPPPPPH). The tract at residues 286–323 (PTKYIGPMPPNNQPLPPPPSPSPSPPPPSPPPPPHPNH) is disordered. The helical transmembrane segment at 332-352 (VLGGVLGGMVLLGLVVVGSAV) threads the bilayer. At 353–695 (LLGRSVRRKN…TANTAFFSCR (343 aa)) the chain is on the cytoplasmic side. At threonine 376 the chain carries Phosphothreonine. At serine 378 the chain carries Phosphoserine. A phosphothreonine mark is found at threonine 386 and threonine 403. The Protein kinase domain occupies 389–661 (FDSGNVIGVG…SMLDGTAPLI (273 aa)). ATP-binding positions include 395–403 (IGVGGSGAT) and lysine 418. The active-site Proton acceptor is aspartate 514. Threonine 657 carries the post-translational modification Phosphothreonine.

The protein in the N-terminal section; belongs to the leguminous lectin family. It in the C-terminal section; belongs to the protein kinase superfamily. Ser/Thr protein kinase family. As to quaternary structure, interacts with INP1. Interaction with INP1 is required for DAF1 polar localization at the future aperture sites in tetrads. Autophosphorylated at Thr-376; Ser-378; Thr-386; Thr-403 and Thr-657. Expressed in roots, leaves, lemma, palea, pistil and anthers.

Its subcellular location is the cell membrane. The protein localises to the cytoplasm. It is found in the cytosol. The enzyme catalyses L-seryl-[protein] + ATP = O-phospho-L-seryl-[protein] + ADP + H(+). The catalysed reaction is L-threonyl-[protein] + ATP = O-phospho-L-threonyl-[protein] + ADP + H(+). Its function is as follows. Legume-lectin receptor-like kinase required for normal pollen development and male fertility. Regulates pollen exine assembly and aperture development. Plays a critical role in annulus formation, and may participate in the formation of the fibrillar-granular layer underneath the operculum. May function by regulating the expression of genes involved in pollen exine development. Kinase activity is required for its function in pollen development. This chain is L-type lectin-domain containing receptor kinase S.7, found in Oryza sativa subsp. japonica (Rice).